Here is a 205-residue protein sequence, read N- to C-terminus: Protein TK0174 (205 aa).

The region spanning 7–201 (EWGEFLVRLA…EEYPRGPVRR (195 aa)) is the AMMECR1 domain.

This chain is Protein TK0174, found in Thermococcus kodakarensis (strain ATCC BAA-918 / JCM 12380 / KOD1) (Pyrococcus kodakaraensis (strain KOD1)).